Here is a 285-residue protein sequence, read N- to C-terminus: Iron uptake system component EfeM (285 aa).

An N-terminal signal peptide occupies residues 1–34 (MTYPLLTRKTLMKKTPLALLLTLGLLQTPLAAFA).

This sequence belongs to the EfeM/EfeO family. Component of the iron transporter efeUOB/M complex composed of EfeU, EfeM and EfeB.

Its subcellular location is the periplasm. Its function is as follows. Part of the iron transporter system efeUOB/M involved in iron import. Specifically binds Fe(3+), which is produced by EfeB-mediated oxidation of Fe(2+), and delivers it to the cell inner membrane permease EfeU. Also binds Zn(2+) and Cu(2+) in vitro. The chain is Iron uptake system component EfeM from Pseudomonas syringae pv. syringae (strain B728a).